The primary structure comprises 385 residues: Protein pelota homolog (385 aa).

Residue Lys162 forms a Glycyl lysine isopeptide (Lys-Gly) (interchain with G-Cter in SUMO2) linkage. Phosphoserine occurs at positions 374, 380, 381, and 382.

This sequence belongs to the eukaryotic release factor 1 family. Pelota subfamily. As to quaternary structure, component of the Pelota-HBS1L complex, also named Dom34-Hbs1 complex, composed of PELO and HBS1L. Interacts with PINK1. Interacts with ABCE1. Interacts with CNOT4. Requires a divalent metal cation as cofactor.

It localises to the cytoplasm. Functionally, component of the Pelota-HBS1L complex, a complex that recognizes stalled ribosomes and triggers the No-Go Decay (NGD) pathway. In the Pelota-HBS1L complex, PELO recognizes ribosomes stalled at the 3' end of an mRNA and engages stalled ribosomes by destabilizing mRNA in the mRNA channel. Following mRNA extraction from stalled ribosomes by the SKI complex, the Pelota-HBS1L complex promotes recruitment of ABCE1, which drives the disassembly of stalled ribosomes, followed by degradation of damaged mRNAs as part of the NGD pathway. As part of the PINK1-regulated signaling, upon mitochondrial damage is recruited to the ribosome/mRNA-ribonucleoprotein complex associated to mitochondrial outer membrane thereby enabling the recruitment of autophagy receptors and induction of mitophagy. In Rattus norvegicus (Rat), this protein is Protein pelota homolog (Pelo).